The chain runs to 1090 residues: UPF0507 protein SCRG_01893 (1090 aa).

Residues 289–436 (FSVNQLLTDF…FEDFNKNTGN (148 aa)) form the VPS9 domain.

This sequence belongs to the UPF0507 family.

The chain is UPF0507 protein SCRG_01893 from Saccharomyces cerevisiae (strain RM11-1a) (Baker's yeast).